The primary structure comprises 814 residues: Protein fam-161 (814 aa).

Positions 71–87 (ITQHRSSYKVTKSSSCH) are enriched in polar residues. Disordered stretches follow at residues 71-130 (ITQH…SWSQ), 150-255 (RHQV…ATSA), 569-610 (SRSK…THAT), and 714-814 (MKSA…SSEA). The segment covering 99–111 (MPRHLDLKPRSSE) has biased composition (basic and acidic residues). The segment covering 174-193 (STAPSQVSVTSSVQSVAALS) has biased composition (low complexity). 2 stretches are compositionally biased toward polar residues: residues 194–207 (GQNP…TPSH) and 216–235 (RTHQ…TLQN). A compositionally biased stretch (basic residues) spans 236–249 (PRHRTSSASRHHST). Polar residues-rich tracts occupy residues 570-583 (RSKS…NCQE) and 594-610 (ENLP…THAT). Positions 606 to 689 (STHATQLREE…LAEMKQRVLN (84 aa)) form a coiled coil. Over residues 714-727 (MKSAKGRGIERVQS) the composition is skewed to basic and acidic residues. Polar residues predominate over residues 728-745 (QEKQQSIGRRSSEVSGSG). Over residues 751-765 (KGYEESFESEDKSEK) the composition is skewed to basic and acidic residues. Composition is skewed to low complexity over residues 766 to 779 (SGSS…SGSE) and 795 to 814 (SKST…SSEA).

This sequence belongs to the FAM161 family. Expressed in amphid and phasmid ciliated neurons.

It is found in the cell projection. The protein resides in the cilium. Its subcellular location is the cytoplasm. It localises to the cytoskeleton. The protein localises to the cilium axoneme. The polypeptide is Protein fam-161 (Caenorhabditis elegans).